We begin with the raw amino-acid sequence, 1551 residues long: Pentafunctional AROM polypeptide 1 (1551 aa).

The tract at residues 1 to 379 (MSIEKVSILG…YESKAHQIFK (379 aa)) is 3-dehydroquinate synthase. Residues 42–44 (DTN), 80–83 (ENHK), 111–113 (GGV), and D116 contribute to the NAD(+) site. Residue R127 participates in 7-phospho-2-dehydro-3-deoxy-D-arabino-heptonate binding. 136–137 (TT) is an NAD(+) binding site. 7-phospho-2-dehydro-3-deoxy-D-arabino-heptonate is bound by residues D143 and K149. K158 is an NAD(+) binding site. N159 serves as a coordination point for 7-phospho-2-dehydro-3-deoxy-D-arabino-heptonate. NAD(+) contacts are provided by residues 176 to 179 (FLQT) and N187. E191 lines the Zn(2+) pocket. 7-phospho-2-dehydro-3-deoxy-D-arabino-heptonate contacts are provided by residues 191 to 194 (EVVK) and K243. E253 (proton acceptor; for 3-dehydroquinate synthase activity) is an active-site residue. 7-phospho-2-dehydro-3-deoxy-D-arabino-heptonate-binding positions include 257–261 (RNLLN) and H264. H264 lines the Zn(2+) pocket. H268 serves as the catalytic Proton acceptor; for 3-dehydroquinate synthase activity. The 7-phospho-2-dehydro-3-deoxy-D-arabino-heptonate site is built by H280 and K351. H280 is a Zn(2+) binding site. The segment at 392–835 (VHPFANRHPE…WDVLHSKFNA (444 aa)) is EPSP synthase. Residues 854–1044 (DRSIVIIGMR…LPATRSTFVT (191 aa)) are shikimate kinase. Residue 861–868 (GMRAAGKT) participates in ATP binding. The segment at 1045–1258 (LTYPDLRKVP…IGVGQLSLKE (214 aa)) is 3-dehydroquinase. The active-site Proton acceptor; for 3-dehydroquinate dehydratase activity is the H1162. K1191 functions as the Schiff-base intermediate with substrate; for 3-dehydroquinate dehydratase activity in the catalytic mechanism. The tract at residues 1271–1551 (EKEFWVVGSP…KVIHSAVLNE (281 aa)) is shikimate dehydrogenase.

In the N-terminal section; belongs to the sugar phosphate cyclases superfamily. Dehydroquinate synthase family. This sequence in the 2nd section; belongs to the EPSP synthase family. The protein in the 3rd section; belongs to the shikimate kinase family. It in the 4th section; belongs to the type-I 3-dehydroquinase family. In the C-terminal section; belongs to the shikimate dehydrogenase family. In terms of assembly, homodimer. Zn(2+) serves as cofactor.

It localises to the cytoplasm. The catalysed reaction is 7-phospho-2-dehydro-3-deoxy-D-arabino-heptonate = 3-dehydroquinate + phosphate. It catalyses the reaction 3-dehydroquinate = 3-dehydroshikimate + H2O. The enzyme catalyses shikimate + NADP(+) = 3-dehydroshikimate + NADPH + H(+). It carries out the reaction shikimate + ATP = 3-phosphoshikimate + ADP + H(+). The catalysed reaction is 3-phosphoshikimate + phosphoenolpyruvate = 5-O-(1-carboxyvinyl)-3-phosphoshikimate + phosphate. It participates in metabolic intermediate biosynthesis; chorismate biosynthesis; chorismate from D-erythrose 4-phosphate and phosphoenolpyruvate: step 2/7. Its pathway is metabolic intermediate biosynthesis; chorismate biosynthesis; chorismate from D-erythrose 4-phosphate and phosphoenolpyruvate: step 3/7. It functions in the pathway metabolic intermediate biosynthesis; chorismate biosynthesis; chorismate from D-erythrose 4-phosphate and phosphoenolpyruvate: step 4/7. The protein operates within metabolic intermediate biosynthesis; chorismate biosynthesis; chorismate from D-erythrose 4-phosphate and phosphoenolpyruvate: step 5/7. It participates in metabolic intermediate biosynthesis; chorismate biosynthesis; chorismate from D-erythrose 4-phosphate and phosphoenolpyruvate: step 6/7. In terms of biological role, the AROM polypeptide catalyzes 5 consecutive enzymatic reactions in prechorismate polyaromatic amino acid biosynthesis. The polypeptide is Pentafunctional AROM polypeptide 1 (Lodderomyces elongisporus (strain ATCC 11503 / CBS 2605 / JCM 1781 / NBRC 1676 / NRRL YB-4239) (Yeast)).